The following is a 242-amino-acid chain: DNA repair protein RecO (242 aa).

This sequence belongs to the RecO family.

Functionally, involved in DNA repair and RecF pathway recombination. This is DNA repair protein RecO from Nitrosospira multiformis (strain ATCC 25196 / NCIMB 11849 / C 71).